The following is a 2605-amino-acid chain: Non-reducing polyketide synthase dbaI (2605 aa).

The interval 97-243 (PNTLLIPLVM…PASEISDLHR (147 aa)) is N-terminal acylcarrier protein transacylase domain (SAT). The active-site Nucleophile; for transacylase activity is cysteine 144. The Proton donor/acceptor; for transacylase activity role is filled by histidine 262. A Ketosynthase family 3 (KS3) domain is found at 382–798 (ENDIAVVGMS…GSNASIVVTQ (417 aa)). Active-site for beta-ketoacyl synthase activity residues include cysteine 547, histidine 682, and histidine 721. The interval 908-1195 (FGGQVSTFVG…VTNMASRALG (288 aa)) is malonyl-CoA:ACP transacylase (MAT) domain. Positions 1285 to 1420 (PNTLLTFVGY…GRVIFRSISD (136 aa)) are N-terminal hotdog fold. Residues 1285 to 1596 (PNTLLTFVGY…YVKIPKASMS (312 aa)) form the PKS/mFAS DH domain. The interval 1316–1594 (LIRGHIIAQT…ISYVKIPKAS (279 aa)) is product template (PT) domain. The active-site Proton acceptor; for dehydratase activity is the histidine 1320. A C-terminal hotdog fold region spans residues 1447 to 1596 (EVDEVLQNRN…YVKIPKASMS (150 aa)). The active-site Proton donor; for dehydratase activity is the aspartate 1504. The 75-residue stretch at 1665–1739 (GQLTQRIKSI…SLIKCVRKAM (75 aa)) folds into the Carrier domain. Position 1699 is an O-(pantetheine 4'-phosphoryl)serine (serine 1699). Residues 1742–1780 (DADSAEYTTEQSTSEAADSDDKSTNYTTPSTPGEEALDM) are disordered. The span at 1747–1757 (EYTTEQSTSEA) shows a compositional bias: polar residues. Residues 1963 to 2151 (DWPLNRLFYR…VGYGHVDWTD (189 aa)) form a methyltransferase domain region. Residues 2230 to 2473 (VTGATGSLGC…LSWTPVDVVA (244 aa)) are NADPH-binding (R) domain.

The enzyme catalyses 4 malonyl-CoA + acetyl-CoA + AH2 + S-adenosyl-L-methionine + 3 H(+) = 2,4-dihydroxy-3-methyl-6-(2-oxopropyl)benzaldehyde + A + S-adenosyl-L-homocysteine + 4 CO2 + 5 CoA + H2O. It participates in secondary metabolite biosynthesis. In terms of biological role, non-reducing polyketide synthase; part of the gene cluster that mediates the biosynthesis of the antibiotic 2,4-dihydroxy-3-methyl-6-(2-oxopropyl)benzaldehyde (DHMBA) and its derivatives. The direct non-reducing polyketide synthase dbaI product is 2,4-dihydroxy-3-methyl-6-(2-oxopropyl)benzaldehyde (DHMBA), produced by condensation of one acetyl-CoA starter unit with 4 malonyl-CoA units and one methylation step. The FAD-dependent monooxygenase dbaH is responsible for the synthesis of yellow pigments derived from the oxidation of DHMBA. The roles of dbaB, C, E and F have still to be determined. This is Non-reducing polyketide synthase dbaI from Emericella nidulans (strain FGSC A4 / ATCC 38163 / CBS 112.46 / NRRL 194 / M139) (Aspergillus nidulans).